The primary structure comprises 356 residues: Probable L-asparaginase 4 (356 aa).

The first 22 residues, 1-22, serve as a signal peptide directing secretion; that stretch reads MWGFIVTCGIFLVLLCQLRLLS. The Asparaginase/glutaminase domain occupies 36-356; that stretch reads PNVTVFAMGG…RDIEGLFSIK (321 aa). Asn37 carries N-linked (GlcNAc...) asparagine glycosylation. Thr46 serves as the catalytic O-isoaspartyl threonine intermediate. An N-linked (GlcNAc...) asparagine glycan is attached at Asn52. Substrate-binding positions include Ser93 and 126–127; that span reads TD. The N-linked (GlcNAc...) asparagine glycan is linked to Asn176.

Belongs to the asparaginase 1 family.

The protein localises to the secreted. It localises to the cell wall. It carries out the reaction L-asparagine + H2O = L-aspartate + NH4(+). This chain is Probable L-asparaginase 4, found in Schizosaccharomyces pombe (strain 972 / ATCC 24843) (Fission yeast).